The chain runs to 172 residues: RNA pyrophosphohydrolase (172 aa).

A Nudix hydrolase domain is found at 6–149 (GFRANVGIII…KRDVYRKVMK (144 aa)). The Nudix box motif lies at 38–59 (GGVDEGETPEEAMFRELYEEVG).

It belongs to the Nudix hydrolase family. RppH subfamily. It depends on a divalent metal cation as a cofactor.

In terms of biological role, accelerates the degradation of transcripts by removing pyrophosphate from the 5'-end of triphosphorylated RNA, leading to a more labile monophosphorylated state that can stimulate subsequent ribonuclease cleavage. The polypeptide is RNA pyrophosphohydrolase (Shewanella sediminis (strain HAW-EB3)).